A 59-amino-acid chain; its full sequence is Cecropin-A2 (59 aa).

An N-terminal signal peptide occupies residues Met1 to Ala23.

The protein belongs to the cecropin family.

Its subcellular location is the secreted. Cecropins have lytic and antibacterial activity against several Gram-positive and Gram-negative bacteria. The chain is Cecropin-A2 (CECA2) from Aedes albopictus (Asian tiger mosquito).